The chain runs to 426 residues: Serine hydroxymethyltransferase (426 aa).

Residues Leu122 and Gly126–Leu128 contribute to the (6S)-5,6,7,8-tetrahydrofolate site. Lys231 bears the N6-(pyridoxal phosphate)lysine mark. Residues Glu247 and Ser355 to Phe357 each bind (6S)-5,6,7,8-tetrahydrofolate.

The protein belongs to the SHMT family. Homodimer. Pyridoxal 5'-phosphate is required as a cofactor.

It localises to the cytoplasm. It catalyses the reaction (6R)-5,10-methylene-5,6,7,8-tetrahydrofolate + glycine + H2O = (6S)-5,6,7,8-tetrahydrofolate + L-serine. Its pathway is one-carbon metabolism; tetrahydrofolate interconversion. The protein operates within amino-acid biosynthesis; glycine biosynthesis; glycine from L-serine: step 1/1. In terms of biological role, catalyzes the reversible interconversion of serine and glycine with tetrahydrofolate (THF) serving as the one-carbon carrier. This reaction serves as the major source of one-carbon groups required for the biosynthesis of purines, thymidylate, methionine, and other important biomolecules. Also exhibits THF-independent aldolase activity toward beta-hydroxyamino acids, producing glycine and aldehydes, via a retro-aldol mechanism. In Cyanothece sp. (strain PCC 7425 / ATCC 29141), this protein is Serine hydroxymethyltransferase.